A 161-amino-acid polypeptide reads, in one-letter code: C-type lectin lectoxin-Lio3 (161 aa).

The first 23 residues, 1 to 23, serve as a signal peptide directing secretion; the sequence is MRRFIFMSLGLLVLAFSLSGIGA. 3 cysteine pairs are disulfide-bonded: Cys-27–Cys-38, Cys-55–Cys-154, and Cys-129–Cys-146. Residues 34–155 form the C-type lectin domain; sequence HNISCYKLFT…CGLLHYFICQ (122 aa). A glycan (N-linked (GlcNAc...) asparagine) is linked at Asn-35. The short motif at 117–119 is the Mannose-binding element; the sequence is KGE. Ca(2+) is bound by residues Glu-127, Asn-142, and Asp-143.

It belongs to the true venom lectin family. In terms of tissue distribution, expressed by the venom gland.

Its subcellular location is the secreted. Mannose-binding lectin which recognizes specific carbohydrate structures and agglutinates a variety of animal cells by binding to cell-surface glycoproteins and glycolipids. May be a calcium-dependent lectin. The chain is C-type lectin lectoxin-Lio3 from Erythrolamprus poecilogyrus (Water snake).